A 276-amino-acid polypeptide reads, in one-letter code: NH(3)-dependent NAD(+) synthetase (276 aa).

Gly43–Ser50 is an ATP binding site. Mg(2+) is bound at residue Asp49. Position 146 (Arg146) interacts with deamido-NAD(+). Thr166 is an ATP binding site. A Mg(2+)-binding site is contributed by Glu171. Deamido-NAD(+)-binding residues include Lys179 and Asp186. ATP-binding residues include Lys195 and Thr217. A deamido-NAD(+)-binding site is contributed by His266–Lys267.

This sequence belongs to the NAD synthetase family. Homodimer.

The catalysed reaction is deamido-NAD(+) + NH4(+) + ATP = AMP + diphosphate + NAD(+) + H(+). The protein operates within cofactor biosynthesis; NAD(+) biosynthesis; NAD(+) from deamido-NAD(+) (ammonia route): step 1/1. Functionally, catalyzes the ATP-dependent amidation of deamido-NAD to form NAD. Uses ammonia as a nitrogen source. The chain is NH(3)-dependent NAD(+) synthetase from Aliivibrio fischeri (strain MJ11) (Vibrio fischeri).